The primary structure comprises 261 residues: F-actin-capping protein subunit alpha (261 aa).

It belongs to the F-actin-capping protein alpha subunit family. In terms of assembly, heterodimer of an alpha and a beta subunit.

Its function is as follows. F-actin-capping proteins bind in a Ca(2+)-independent manner to the fast growing ends of actin filaments (barbed end) thereby blocking the exchange of subunits at these ends. Unlike other capping proteins (such as gelsolin and severin), these proteins do not sever actin filaments. This Eremothecium gossypii (strain ATCC 10895 / CBS 109.51 / FGSC 9923 / NRRL Y-1056) (Yeast) protein is F-actin-capping protein subunit alpha (CAP1).